Here is a 1008-residue protein sequence, read N- to C-terminus: Kinesin-like protein KIN-5C (1008 aa).

A Kinesin motor domain is found at 12–359 (NVQVLLRCRP…LDYAHRAKSI (348 aa)). Residue 98 to 105 (GQTGTGKT) coordinates ATP. Residues 402 to 459 (KDRYQQEENERKAMADQIEQMTTSLEANQKQINDLQEKYDSELQHSADLSKKLEATEK) adopt a coiled-coil conformation. 3 disordered regions span residues 910–931 (VEAH…TAGI), 943–962 (YKDY…EVPS), and 975–1008 (ESLM…TINN). Basic and acidic residues predominate over residues 913 to 925 (HLGESQHLQESHS). Basic and acidic residues predominate over residues 979–995 (DEFRENHPYEPSKDRRP).

Belongs to the TRAFAC class myosin-kinesin ATPase superfamily. Kinesin family. KIN-5/BimC subfamily.

It localises to the cytoplasm. The protein localises to the cytoskeleton. It is found in the spindle. In terms of biological role, responsible for microtubule translocation. May be important for the organization of phragmoplast-specific arrays of microtubules. Plays an essential role in stabilizing the mitotic spindle. Required during mitotic cytokinesis. The polypeptide is Kinesin-like protein KIN-5C (Oryza sativa subsp. japonica (Rice)).